A 130-amino-acid chain; its full sequence is MARVAGIDLPNNKRLDIALRYIYGIGPAISDEIIKELSLNPAKRVKDLTEEEVGRINNLITKNLKVEGDLRREVQSNIKRLIEIRSYRGLRHRRNLPVRGQRTKTNARTRRGKRKTVGAGKSTSSIKRVK.

Residues 97–116 (PVRGQRTKTNARTRRGKRKT) are compositionally biased toward basic residues. A disordered region spans residues 97–130 (PVRGQRTKTNARTRRGKRKTVGAGKSTSSIKRVK). The span at 121 to 130 (KSTSSIKRVK) shows a compositional bias: polar residues.

Belongs to the universal ribosomal protein uS13 family. In terms of assembly, part of the 30S ribosomal subunit. Forms a loose heterodimer with protein S19. Forms two bridges to the 50S subunit in the 70S ribosome.

Its function is as follows. Located at the top of the head of the 30S subunit, it contacts several helices of the 16S rRNA. In the 70S ribosome it contacts the 23S rRNA (bridge B1a) and protein L5 of the 50S subunit (bridge B1b), connecting the 2 subunits; these bridges are implicated in subunit movement. Contacts the tRNAs in the A and P-sites. This chain is Small ribosomal subunit protein uS13, found in Endomicrobium trichonymphae.